Here is a 137-residue protein sequence, read N- to C-terminus: 5-hydroxyisourate hydrolase (137 aa).

The first 23 residues, 1-23 (MLKRYLVLSVVTAAFSLPSLVYA), serve as a signal peptide directing secretion. Positions 32, 70, and 134 each coordinate substrate.

This sequence belongs to the transthyretin family. 5-hydroxyisourate hydrolase subfamily. Homotetramer.

It localises to the periplasm. It carries out the reaction 5-hydroxyisourate + H2O = 5-hydroxy-2-oxo-4-ureido-2,5-dihydro-1H-imidazole-5-carboxylate + H(+). Catalyzes the hydrolysis of 5-hydroxyisourate (HIU) to 2-oxo-4-hydroxy-4-carboxy-5-ureidoimidazoline (OHCU). The polypeptide is 5-hydroxyisourate hydrolase (hiuH) (Escherichia coli O157:H7).